The chain runs to 1298 residues: MDINNNIDNITNSNNNIEKNNNINNFDNNNNNNNILYISSSESNNNNNINSSNSSSNNTNNSNNSSISNNNNNNNNNNNNNNNISIEGNTANNSDIKVGTSLTNSIKSFKKLFNNQKSNNNNNNLQVNHFQQSQSLPPSSNTSPTFSSTSPIIIVSDNTNIESLDLEINSNNSGSIGSNNSGDNNNINMNYKSKSLSLNYSILRPLCDTDNISNNNNNNNNNSNNSNNNNNMSSSDNNNNSNSNNTTNGGQLKRNNSSNNNNRYSIGGPLKMSNSSDFNDYLLNNNILYNINQPNRKTPPPNLMSVLKNSFTQYTPPSTTLTSPTSTRNPNRLSTNLSNVTNISSSTSSSSSSLNANNNTNNNNQQLQQQQQQQQQQQLQQQQQLTKSYSVSNLMRSQSSSSSSQSPLIQQSDQVTFDYDYIYRRFLRSRSELTLPSWDNAQYEGDFDTEIQDTLTRALSNGNLPSDNKRQSLHLSTESTTSNNNNNNNNNNNNNNNNNNNKSKTDDTTNSATTTTTTTTTTTTTTTTNSTTTTTQLNNGKNLIGLVYNDKDEVIAGERDKIIGLFTDISKVTGTQFLEEFLFTYHYYMTSVDLLENLKGRFNNPLMDQAAQSISILEENHDKVKIEQLSTHIRLRVINVIKKWIENHGYAFATDINLYQMLVDFIDGDVMSFSQRWGQYLKKAINDSGCLLRYIAVNVKEASSKQLREIISLDNLDAISKLMSQSLQLKERKKGLKVIKNSFTGNEAVEWLINKFNLDSKDEALETLSKMLQSNLIFHHSKSGSSFSPSSSSSSTTTTTTTSSSSSSSNTTTANMASSSSATDNSSSGGVVTSSSSSSSSSSSSPSNGNGTTAITSTSLPNSISSSNSTSILTSLVVNSNSSGIANGSSTPSIPSSVTSPLTNSKSTLNSTPSSSSNSFTFKDKSTSIYYFIFENINFPEPIVPKTFFSSPNSTFSITFLDIHPVEIARQLTLIDYELFKKLSPTDFYHTAWSKPDAKEKVPNLINFINRSNTVSYWVATEILSSSNIKHRVSVLKRFITIAEILRKFHNWNTLTGILMGLNLGSIQRLKKTWESIDKKQLDSLQNLINLTSERLNYSNYRKEMSTPTYPCLPFMAVYLKDLYFIEENPDYLENGYINFEKMKMISKVLIEIKRYQTEQYWLKKIDAIENILKSVVLTDKDLYKASHMIEQPQRTMTVGSNLKAQSFLTTTTTTTTTNNLNNNNNNNNPNNNNNNNNNSANNKSSPSPSPSSSPITSSPISSLTINNNNTISSNLSASTDSSINTKKKSSFLMFGKK.

Disordered stretches follow at residues 1-26 (MDIN…INNF), 46-88 (NNNI…SIEG), 211-271 (NISN…GPLK), 314-384 (YTPP…QQQQ), and 459-533 (LSNG…STTT). 2 stretches are compositionally biased toward low complexity: residues 211 to 245 (NISN…NSNN) and 315 to 384 (TPPS…QQQQ). Residues 352–389 (SSLNANNNTNNNNQQLQQQQQQQQQQQLQQQQQLTKSY) adopt a coiled-coil conformation. The span at 473–482 (LHLSTESTTS) shows a compositional bias: polar residues. 2 stretches are compositionally biased toward low complexity: residues 483–501 (NNNN…NNNN) and 508–533 (TTNS…STTT). The N-terminal Ras-GEF domain occupies 550-689 (DKDEVIAGER…YLKKAINDSG (140 aa)). A DEP domain is found at 723-801 (MSQSLQLKER…SSSSTTTTTT (79 aa)). 2 disordered regions span residues 781-864 (SKSG…PNSI) and 884-920 (GIAN…SNSF). The span at 783 to 864 (SGSSFSPSSS…ITSTSLPNSI (82 aa)) shows a compositional bias: low complexity. A Ras-GEF domain is found at 964 to 1193 (HPVEIARQLT…YKASHMIEQP (230 aa)). The interval 1214-1267 (TTTTTNNLNNNNNNNNPNNNNNNNNNSANNKSSPSPSPSSSPITSSPISSLTIN) is disordered.

Promotes the exchange of Ras-bound GDP by GTP. Seems to play a role in chemotaxis. This is Ras guanine nucleotide exchange factor Q (gefQ) from Dictyostelium discoideum (Social amoeba).